The sequence spans 309 residues: tRNA dimethylallyltransferase 1 (309 aa).

14 to 21 (GPTASGKS) contributes to the ATP binding site. 16–21 (TASGKS) is a binding site for substrate. The interval 39 to 42 (DSMQ) is interaction with substrate tRNA.

The protein belongs to the IPP transferase family. In terms of assembly, monomer. Requires Mg(2+) as cofactor.

The catalysed reaction is adenosine(37) in tRNA + dimethylallyl diphosphate = N(6)-dimethylallyladenosine(37) in tRNA + diphosphate. Its function is as follows. Catalyzes the transfer of a dimethylallyl group onto the adenine at position 37 in tRNAs that read codons beginning with uridine, leading to the formation of N6-(dimethylallyl)adenosine (i(6)A). The polypeptide is tRNA dimethylallyltransferase 1 (Pelobacter propionicus (strain DSM 2379 / NBRC 103807 / OttBd1)).